Here is a 637-residue protein sequence, read N- to C-terminus: Biosynthetic arginine decarboxylase (637 aa).

N6-(pyridoxal phosphate)lysine is present on lysine 101. 286-296 lines the substrate pocket; it reads FDVGGGLAVDY.

It belongs to the Orn/Lys/Arg decarboxylase class-II family. SpeA subfamily. Mg(2+) is required as a cofactor. It depends on pyridoxal 5'-phosphate as a cofactor.

The enzyme catalyses L-arginine + H(+) = agmatine + CO2. It participates in amine and polyamine biosynthesis; agmatine biosynthesis; agmatine from L-arginine: step 1/1. Its function is as follows. Catalyzes the biosynthesis of agmatine from arginine. This Shewanella putrefaciens (strain CN-32 / ATCC BAA-453) protein is Biosynthetic arginine decarboxylase.